We begin with the raw amino-acid sequence, 431 residues long: Enolase (431 aa).

Gln167 provides a ligand contact to (2R)-2-phosphoglycerate. Glu209 (proton donor) is an active-site residue. 3 residues coordinate Mg(2+): Asp246, Glu289, and Asp316. 4 residues coordinate (2R)-2-phosphoglycerate: Lys341, Arg370, Ser371, and Lys392. The Proton acceptor role is filled by Lys341.

Belongs to the enolase family. As to quaternary structure, component of the RNA degradosome, a multiprotein complex involved in RNA processing and mRNA degradation. The cofactor is Mg(2+).

It is found in the cytoplasm. The protein localises to the secreted. The protein resides in the cell surface. It catalyses the reaction (2R)-2-phosphoglycerate = phosphoenolpyruvate + H2O. It functions in the pathway carbohydrate degradation; glycolysis; pyruvate from D-glyceraldehyde 3-phosphate: step 4/5. In terms of biological role, catalyzes the reversible conversion of 2-phosphoglycerate (2-PG) into phosphoenolpyruvate (PEP). It is essential for the degradation of carbohydrates via glycolysis. The polypeptide is Enolase (Shewanella halifaxensis (strain HAW-EB4)).